Consider the following 194-residue polypeptide: Peptidyl-tRNA hydrolase (194 aa).

TRNA is bound at residue tyrosine 17. Residue histidine 22 is the Proton acceptor of the active site. 3 residues coordinate tRNA: tyrosine 68, asparagine 70, and asparagine 116.

The protein belongs to the PTH family. As to quaternary structure, monomer.

It is found in the cytoplasm. It carries out the reaction an N-acyl-L-alpha-aminoacyl-tRNA + H2O = an N-acyl-L-amino acid + a tRNA + H(+). Its function is as follows. Hydrolyzes ribosome-free peptidyl-tRNAs (with 1 or more amino acids incorporated), which drop off the ribosome during protein synthesis, or as a result of ribosome stalling. Catalyzes the release of premature peptidyl moieties from peptidyl-tRNA molecules trapped in stalled 50S ribosomal subunits, and thus maintains levels of free tRNAs and 50S ribosomes. The chain is Peptidyl-tRNA hydrolase from Pseudomonas putida (strain ATCC 700007 / DSM 6899 / JCM 31910 / BCRC 17059 / LMG 24140 / F1).